A 92-amino-acid chain; its full sequence is Small ribosomal subunit protein uS19 (92 aa).

This sequence belongs to the universal ribosomal protein uS19 family.

Its function is as follows. Protein S19 forms a complex with S13 that binds strongly to the 16S ribosomal RNA. This Bacillus cytotoxicus (strain DSM 22905 / CIP 110041 / 391-98 / NVH 391-98) protein is Small ribosomal subunit protein uS19.